The chain runs to 396 residues: Tryptophan synthase beta chain (396 aa).

An N6-(pyridoxal phosphate)lysine modification is found at K88.

Belongs to the TrpB family. As to quaternary structure, tetramer of two alpha and two beta chains. It depends on pyridoxal 5'-phosphate as a cofactor.

The catalysed reaction is (1S,2R)-1-C-(indol-3-yl)glycerol 3-phosphate + L-serine = D-glyceraldehyde 3-phosphate + L-tryptophan + H2O. Its pathway is amino-acid biosynthesis; L-tryptophan biosynthesis; L-tryptophan from chorismate: step 5/5. The beta subunit is responsible for the synthesis of L-tryptophan from indole and L-serine. The polypeptide is Tryptophan synthase beta chain (Shewanella baltica (strain OS155 / ATCC BAA-1091)).